The chain runs to 113 residues: Protein PucD (113 aa).

Its function is as follows. Seems to be required for the LH-II stabilization. This chain is Protein PucD (pucD), found in Rhodobacter capsulatus (Rhodopseudomonas capsulata).